We begin with the raw amino-acid sequence, 707 residues long: Polyribonucleotide nucleotidyltransferase (707 aa).

Mg(2+) contacts are provided by aspartate 486 and aspartate 492. In terms of domain architecture, KH spans 553-612; that stretch reads PRIHTIKINPEKIKDVIGKGGSVIRALTEETGTTIEIEDDGTVKIAATDGDKAKHAIRRI. The 69-residue stretch at 622–690 folds into the S1 motif domain; the sequence is GRIYQGKVTR…RQGRVRLSIK (69 aa).

The protein belongs to the polyribonucleotide nucleotidyltransferase family. As to quaternary structure, component of the RNA degradosome, which is a multiprotein complex involved in RNA processing and mRNA degradation. It depends on Mg(2+) as a cofactor.

It localises to the cytoplasm. It catalyses the reaction RNA(n+1) + phosphate = RNA(n) + a ribonucleoside 5'-diphosphate. Its function is as follows. Involved in mRNA degradation. Catalyzes the phosphorolysis of single-stranded polyribonucleotides processively in the 3'- to 5'-direction. The chain is Polyribonucleotide nucleotidyltransferase from Edwardsiella ictaluri (strain 93-146).